A 589-amino-acid chain; its full sequence is DNA ligase (589 aa).

E250 lines the ATP pocket. The active-site N6-AMP-lysine intermediate is K252. The ATP site is built by R257, R272, E302, F342, R417, and K423.

It belongs to the ATP-dependent DNA ligase family. It depends on Mg(2+) as a cofactor.

The enzyme catalyses ATP + (deoxyribonucleotide)n-3'-hydroxyl + 5'-phospho-(deoxyribonucleotide)m = (deoxyribonucleotide)n+m + AMP + diphosphate.. DNA ligase that seals nicks in double-stranded DNA during DNA replication, DNA recombination and DNA repair. In Cenarchaeum symbiosum (strain A), this protein is DNA ligase.